The chain runs to 271 residues: Mannosyl-3-phosphoglycerate phosphatase (271 aa).

Asp-13 acts as the Nucleophile in catalysis. The Mg(2+) site is built by Asp-13, Asp-15, and Asp-214.

This sequence belongs to the HAD-like hydrolase superfamily. MPGP family. Mg(2+) serves as cofactor.

The protein resides in the cytoplasm. The catalysed reaction is 2-O-(alpha-D-mannosyl)-3-phosphoglycerate + H2O = (2R)-2-O-(alpha-D-mannosyl)-glycerate + phosphate. The sequence is that of Mannosyl-3-phosphoglycerate phosphatase from Escherichia coli (strain 55989 / EAEC).